A 236-amino-acid chain; its full sequence is Urease accessory protein UreG (236 aa).

Positions 1–26 are disordered; that stretch reads MHDHSLHSGHDHGLGPGSFHDRGAPH. Position 42–49 (42–49) interacts with GTP; it reads GPVGSGKT.

It belongs to the SIMIBI class G3E GTPase family. UreG subfamily. As to quaternary structure, homodimer. UreD, UreF and UreG form a complex that acts as a GTP-hydrolysis-dependent molecular chaperone, activating the urease apoprotein by helping to assemble the nickel containing metallocenter of UreC. The UreE protein probably delivers the nickel.

It is found in the cytoplasm. In terms of biological role, facilitates the functional incorporation of the urease nickel metallocenter. This process requires GTP hydrolysis, probably effectuated by UreG. This is Urease accessory protein UreG from Anaeromyxobacter sp. (strain Fw109-5).